The sequence spans 344 residues: Golgi-associated RAB2 interactor protein 1B (344 aa).

The protein belongs to the GARIN family.

It is found in the golgi apparatus. RAB2B effector protein required for accurate acrosome formation and normal male fertility. In complex with RAB2A/RAB2B, seems to suppress excessive vesicle trafficking during acrosome formation. The sequence is that of Golgi-associated RAB2 interactor protein 1B (Garin1b) from Rattus norvegicus (Rat).